Here is a 384-residue protein sequence, read N- to C-terminus: Farnesyl pyrophosphate synthase 1, mitochondrial (384 aa).

The isopentenyl diphosphate site is built by lysine 89, arginine 92, and glutamine 128. 2 residues coordinate Mg(2+): aspartate 135 and aspartate 139. Arginine 144 serves as a coordination point for dimethylallyl diphosphate. An isopentenyl diphosphate-binding site is contributed by arginine 145. The dimethylallyl diphosphate site is built by lysine 232, threonine 233, glutamine 271, lysine 288, and lysine 297.

This sequence belongs to the FPP/GGPP synthase family. Mg(2+) serves as cofactor. In terms of tissue distribution, the FPS1L mRNA accumulates preferentially in inflorescences, whereas the FPS1S mRNA is predominantly expressed in roots and inflorescences.

It is found in the mitochondrion. It localises to the cytoplasm. It catalyses the reaction isopentenyl diphosphate + dimethylallyl diphosphate = (2E)-geranyl diphosphate + diphosphate. The enzyme catalyses isopentenyl diphosphate + (2E)-geranyl diphosphate = (2E,6E)-farnesyl diphosphate + diphosphate. It participates in isoprenoid biosynthesis; farnesyl diphosphate biosynthesis; farnesyl diphosphate from geranyl diphosphate and isopentenyl diphosphate: step 1/1. The protein operates within isoprenoid biosynthesis; geranyl diphosphate biosynthesis; geranyl diphosphate from dimethylallyl diphosphate and isopentenyl diphosphate: step 1/1. In terms of biological role, catalyzes the sequential condensation of isopentenyl pyrophosphate with the allylic pyrophosphates, dimethylallyl pyrophosphate, and then with the resultant geranylpyrophosphate to the ultimate product farnesyl pyrophosphate. The sequence is that of Farnesyl pyrophosphate synthase 1, mitochondrial (FPS1) from Arabidopsis thaliana (Mouse-ear cress).